A 445-amino-acid polypeptide reads, in one-letter code: UDP-N-acetylmuramoylalanine--D-glutamate ligase (445 aa).

An ATP-binding site is contributed by 110-116; sequence GSNGKTT.

This sequence belongs to the MurCDEF family.

The protein resides in the cytoplasm. The enzyme catalyses UDP-N-acetyl-alpha-D-muramoyl-L-alanine + D-glutamate + ATP = UDP-N-acetyl-alpha-D-muramoyl-L-alanyl-D-glutamate + ADP + phosphate + H(+). It participates in cell wall biogenesis; peptidoglycan biosynthesis. Cell wall formation. Catalyzes the addition of glutamate to the nucleotide precursor UDP-N-acetylmuramoyl-L-alanine (UMA). The polypeptide is UDP-N-acetylmuramoylalanine--D-glutamate ligase (Christiangramia forsetii (strain DSM 17595 / CGMCC 1.15422 / KT0803) (Gramella forsetii)).